We begin with the raw amino-acid sequence, 182 residues long: Protein canopy homolog 2 (182 aa).

The N-terminal stretch at 1 to 20 (MKGWGWLALLLGALLGTAWA) is a signal peptide. The region spanning 24 to 175 (QDLHCGACRA…KRTDLCDHAL (152 aa)) is the Saposin B-type domain. Disulfide bonds link Cys-28-Cys-171, Cys-31-Cys-164, and Cys-86-Cys-137. Ser-115 bears the Phosphoserine mark. The Prevents secretion from ER motif lies at 179–182 (HDEL).

It belongs to the canopy family. In terms of assembly, interacts with MYLIP/MIR. As to expression, expressed in different tissues. Highest levels are detected in adult placenta, liver and pancreas.

Its subcellular location is the endoplasmic reticulum. Positive regulator of neurite outgrowth by stabilizing myosin regulatory light chain (MRLC). It prevents MIR-mediated MRLC ubiquitination and its subsequent proteasomal degradation. The polypeptide is Protein canopy homolog 2 (CNPY2) (Homo sapiens (Human)).